The primary structure comprises 725 residues: Catalase-peroxidase (725 aa).

Positions 1 to 20 (MSSEAKCPFPHAANRSRSNQ) are disordered. Residues 91-215 (WHATGTYRTM…LSATHMGLIY (125 aa)) constitute a cross-link (tryptophyl-tyrosyl-methioninium (Trp-Tyr) (with M-241)). His-92 serves as the catalytic Proton acceptor. Residues 215-241 (YVNPEGPDGSGDYMAAAKDIRATFYRM) constitute a cross-link (tryptophyl-tyrosyl-methioninium (Tyr-Met) (with W-91)). His-256 is a binding site for heme b.

This sequence belongs to the peroxidase family. Peroxidase/catalase subfamily. Homodimer or homotetramer. Heme b is required as a cofactor. In terms of processing, formation of the three residue Trp-Tyr-Met cross-link is important for the catalase, but not the peroxidase activity of the enzyme.

The catalysed reaction is H2O2 + AH2 = A + 2 H2O. It carries out the reaction 2 H2O2 = O2 + 2 H2O. Bifunctional enzyme with both catalase and broad-spectrum peroxidase activity. This chain is Catalase-peroxidase, found in Janthinobacterium sp. (strain Marseille) (Minibacterium massiliensis).